The following is a 148-amino-acid chain: D-aminoacyl-tRNA deacylase (148 aa).

The Gly-cisPro motif, important for rejection of L-amino acids signature appears at 137–138 (GP).

It belongs to the DTD family. In terms of assembly, homodimer.

It localises to the cytoplasm. It carries out the reaction glycyl-tRNA(Ala) + H2O = tRNA(Ala) + glycine + H(+). The catalysed reaction is a D-aminoacyl-tRNA + H2O = a tRNA + a D-alpha-amino acid + H(+). In terms of biological role, an aminoacyl-tRNA editing enzyme that deacylates mischarged D-aminoacyl-tRNAs. Also deacylates mischarged glycyl-tRNA(Ala), protecting cells against glycine mischarging by AlaRS. Acts via tRNA-based rather than protein-based catalysis; rejects L-amino acids rather than detecting D-amino acids in the active site. By recycling D-aminoacyl-tRNA to D-amino acids and free tRNA molecules, this enzyme counteracts the toxicity associated with the formation of D-aminoacyl-tRNA entities in vivo and helps enforce protein L-homochirality. This Lacticaseibacillus casei (strain BL23) (Lactobacillus casei) protein is D-aminoacyl-tRNA deacylase.